We begin with the raw amino-acid sequence, 55 residues long: Large ribosomal subunit protein bL33 (55 aa).

Belongs to the bacterial ribosomal protein bL33 family.

In Micrococcus luteus (strain ATCC 4698 / DSM 20030 / JCM 1464 / CCM 169 / CCUG 5858 / IAM 1056 / NBRC 3333 / NCIMB 9278 / NCTC 2665 / VKM Ac-2230) (Micrococcus lysodeikticus), this protein is Large ribosomal subunit protein bL33.